A 158-amino-acid polypeptide reads, in one-letter code: Transcription elongation factor GreA (158 aa).

The stretch at 4–75 (EKTYPMTQEG…TQLENMIRNA (72 aa)) forms a coiled coil.

This sequence belongs to the GreA/GreB family.

In terms of biological role, necessary for efficient RNA polymerase transcription elongation past template-encoded arresting sites. The arresting sites in DNA have the property of trapping a certain fraction of elongating RNA polymerases that pass through, resulting in locked ternary complexes. Cleavage of the nascent transcript by cleavage factors such as GreA or GreB allows the resumption of elongation from the new 3'terminus. GreA releases sequences of 2 to 3 nucleotides. In Bacillus cereus (strain ATCC 10987 / NRS 248), this protein is Transcription elongation factor GreA.